Consider the following 162-residue polypeptide: NADH-quinone oxidoreductase subunit I (162 aa).

4Fe-4S ferredoxin-type domains lie at 53 to 83 (LRRY…IEAE) and 93 to 122 (TRYD…EGPN). The [4Fe-4S] cluster site is built by cysteine 63, cysteine 66, cysteine 69, cysteine 73, cysteine 102, cysteine 105, cysteine 108, and cysteine 112.

The protein belongs to the complex I 23 kDa subunit family. As to quaternary structure, NDH-1 is composed of 14 different subunits. Subunits NuoA, H, J, K, L, M, N constitute the membrane sector of the complex. The cofactor is [4Fe-4S] cluster.

The protein localises to the cell inner membrane. It catalyses the reaction a quinone + NADH + 5 H(+)(in) = a quinol + NAD(+) + 4 H(+)(out). Functionally, NDH-1 shuttles electrons from NADH, via FMN and iron-sulfur (Fe-S) centers, to quinones in the respiratory chain. The immediate electron acceptor for the enzyme in this species is believed to be ubiquinone. Couples the redox reaction to proton translocation (for every two electrons transferred, four hydrogen ions are translocated across the cytoplasmic membrane), and thus conserves the redox energy in a proton gradient. This is NADH-quinone oxidoreductase subunit I from Rhodospirillum centenum (strain ATCC 51521 / SW).